The primary structure comprises 205 residues: Large ribosomal subunit protein uL4 (205 aa).

Residues Lys-48–Ser-79 are disordered.

This sequence belongs to the universal ribosomal protein uL4 family. In terms of assembly, part of the 50S ribosomal subunit.

One of the primary rRNA binding proteins, this protein initially binds near the 5'-end of the 23S rRNA. It is important during the early stages of 50S assembly. It makes multiple contacts with different domains of the 23S rRNA in the assembled 50S subunit and ribosome. In terms of biological role, forms part of the polypeptide exit tunnel. The sequence is that of Large ribosomal subunit protein uL4 from Methylococcus capsulatus (strain ATCC 33009 / NCIMB 11132 / Bath).